The chain runs to 641 residues: Fructose-1,6-bisphosphatase class 3 (641 aa).

Belongs to the FBPase class 3 family. Mn(2+) serves as cofactor.

It carries out the reaction beta-D-fructose 1,6-bisphosphate + H2O = beta-D-fructose 6-phosphate + phosphate. Its pathway is carbohydrate biosynthesis; gluconeogenesis. This Ligilactobacillus salivarius (strain UCC118) (Lactobacillus salivarius) protein is Fructose-1,6-bisphosphatase class 3.